The sequence spans 513 residues: Microcin J25-processing protein McjC (513 aa).

The Asparagine synthetase domain occupies 176–436; it reads STIDSIIDNI…FGSDIFWKKT (261 aa).

It is found in the cytoplasm. Along with McjB, necessary and sufficient to process the inactive microcin J25 (McjA) precursor into the active peptide. May be involved in the formation of the amide bond between Gly-38 and Glu-53 of McjA. The sequence is that of Microcin J25-processing protein McjC (mcjC) from Escherichia coli.